The sequence spans 270 residues: Tetracenomycin polyketide synthesis O-methyltransferase TcmP (270 aa).

It functions in the pathway antibiotic biosynthesis; tetracenomycin C biosynthesis. In terms of biological role, O-methyltransferase that catalyzes the methylation of the C-9 carboxy group of tetracenomycin E (TCM E) to yield TCM A2. Catalyzes as well the following side reactions: methylation of 8-O-methyl-TCM D3 to 9-carboxymethyl-8-O-methyl-TCM D3; and of TCM B3 to 9-carboxymethyl-TCM B3. This Streptomyces glaucescens protein is Tetracenomycin polyketide synthesis O-methyltransferase TcmP (tcmP).